The sequence spans 505 residues: Geissoschizine oxidase (505 aa).

Residues 9 to 29 form a helical membrane-spanning segment; sequence FSSPAFFLLLPFLFLLIKPLI. Heme is bound at residue Cys443.

It belongs to the cytochrome P450 family. Requires heme as cofactor. In terms of tissue distribution, mainly expressed in roots.

The protein resides in the membrane. It carries out the reaction (19E)-geissoschizine + reduced [NADPH--hemoprotein reductase] + O2 = akuammicine + formate + oxidized [NADPH--hemoprotein reductase] + H2O + H(+). It catalyses the reaction (19E)-geissoschizine + reduced [NADPH--hemoprotein reductase] + O2 = 3,17-didehydrostemmadenine + oxidized [NADPH--hemoprotein reductase] + 2 H2O. The catalysed reaction is 3,17-didehydrostemmadenine = 17-dehydropreakuammicine. It functions in the pathway alkaloid biosynthesis. Monooxygenase involved in the biosynthesis of curare monoterpene indole alkaloids (MIAs), natural products such as strychnine, a neurotoxic compound used as a pesticide to control rodents, and its pharmacologically active derivatives, including brucine, used to regulate blood pressure. Curare alkaloids act as animal glycine receptor antagonists. Catalyzes the conversion of geissoschizine to dehydropreakuammicine by cyclization, which is spontaneously converted into akuammicine by aromatization. The sequence is that of Geissoschizine oxidase from Strychnos nux-vomica (Poison nut).